Here is a 290-residue protein sequence, read N- to C-terminus: 4-hydroxy-tetrahydrodipicolinate synthase (290 aa).

A pyruvate-binding site is contributed by T44. Y132 functions as the Proton donor/acceptor in the catalytic mechanism. The Schiff-base intermediate with substrate role is filled by K160. I202 is a binding site for pyruvate.

It belongs to the DapA family. In terms of assembly, homotetramer; dimer of dimers.

The protein localises to the cytoplasm. The catalysed reaction is L-aspartate 4-semialdehyde + pyruvate = (2S,4S)-4-hydroxy-2,3,4,5-tetrahydrodipicolinate + H2O + H(+). It functions in the pathway amino-acid biosynthesis; L-lysine biosynthesis via DAP pathway; (S)-tetrahydrodipicolinate from L-aspartate: step 3/4. Catalyzes the condensation of (S)-aspartate-beta-semialdehyde [(S)-ASA] and pyruvate to 4-hydroxy-tetrahydrodipicolinate (HTPA). The protein is 4-hydroxy-tetrahydrodipicolinate synthase of Ruegeria pomeroyi (strain ATCC 700808 / DSM 15171 / DSS-3) (Silicibacter pomeroyi).